The sequence spans 367 residues: GDP-perosamine synthase (367 aa).

K181 carries the N6-(pyridoxal phosphate)lysine modification.

Belongs to the DegT/DnrJ/EryC1 family. Homotetramer. It depends on pyridoxal 5'-phosphate as a cofactor.

It carries out the reaction GDP-alpha-D-perosamine + 2-oxoglutarate = GDP-4-dehydro-alpha-D-rhamnose + L-glutamate. It participates in bacterial outer membrane biogenesis; LPS O-antigen biosynthesis. Catalyzes the synthesis of GDP-perosamine from GDP-4-keto-6-deoxy-D-mannose and L-glutamate. Also shows weak activity with L-glutamine. This Vibrio cholerae protein is GDP-perosamine synthase.